The following is a 165-amino-acid chain: Protein SprT (165 aa).

Residues 22–163 (LAQANLKLGR…RCVHCGEQLT (142 aa)) form the SprT-like domain. Residue His78 participates in Zn(2+) binding. Residue Glu79 is part of the active site. His82 is a Zn(2+) binding site.

This sequence belongs to the SprT family. Zn(2+) serves as cofactor.

The protein localises to the cytoplasm. This chain is Protein SprT, found in Escherichia fergusonii (strain ATCC 35469 / DSM 13698 / CCUG 18766 / IAM 14443 / JCM 21226 / LMG 7866 / NBRC 102419 / NCTC 12128 / CDC 0568-73).